Consider the following 132-residue polypeptide: Histone H2A-alpha (132 aa).

At S2 the chain carries N-acetylserine. Residues K5 and K9 each carry the N6-acetyllysine modification. Q106 is modified (N5-methylglutamine). Residue S129 is modified to Phosphoserine. The [ST]-Q motif motif lies at 129–130 (SQ).

It belongs to the histone H2A family. In terms of assembly, the nucleosome is a histone octamer containing two molecules each of H2A, H2B, H3 and H4 assembled in one H3-H4 heterotetramer and two H2A-H2B heterodimers. The octamer wraps approximately 147 bp of DNA. Interacts with mdb1 (via BRCT domain) in vitro; this interaction requires phosphorylation of this protein at the S/T-Q motif. In terms of processing, phosphorylated to form H2AS128ph (gamma-H2A) in response to DNA double-strand breaks (DSBs) generated by exogenous genotoxic agents and by stalled replication forks. Phosphorylation is dependent on the DNA damage checkpoint kinases rad3/ATR and tel1/ATM, spreads on either side of a detected DSB site and may mark the surrounding chromatin for recruitment of proteins required for DNA damage signaling and repair. Gamma-H2A is required for recruiting crb2, a modulator of DNA damage checkpoint signaling, to DSB sites. Gamma-H2A is removed from the DNA prior to the strand invasion-primer extension step of the repair process and subsequently dephosphorylated. Dephosphorylation is necessary for efficient recovery from the DNA damage checkpoint. Post-translationally, acetylated by esa1 to form H2AK4ac and H2AK7ac.

The protein localises to the nucleus. The protein resides in the chromosome. In terms of biological role, core component of nucleosome which plays a central role in DNA double strand break (DSB) repair. Nucleosomes wrap and compact DNA into chromatin, limiting DNA accessibility to the cellular machineries which require DNA as a template. Histones thereby play a central role in transcription regulation, DNA repair, DNA replication and chromosomal stability. DNA accessibility is regulated via a complex set of post-translational modifications of histones, also called histone code, and nucleosome remodeling. This chain is Histone H2A-alpha (hta1), found in Schizosaccharomyces pombe (strain 972 / ATCC 24843) (Fission yeast).